Consider the following 630-residue polypeptide: DNA mismatch repair protein MutL (630 aa).

Polar residues predominate over residues 398–408 (TQTNAFGSMAT). Residues 398 to 425 (TQTNAFGSMATSRDSSRGSYSASESRQR) form a disordered region.

Belongs to the DNA mismatch repair MutL/HexB family.

This protein is involved in the repair of mismatches in DNA. It is required for dam-dependent methyl-directed DNA mismatch repair. May act as a 'molecular matchmaker', a protein that promotes the formation of a stable complex between two or more DNA-binding proteins in an ATP-dependent manner without itself being part of a final effector complex. In Shewanella baltica (strain OS185), this protein is DNA mismatch repair protein MutL.